The chain runs to 282 residues: HTH-type transcriptional activator RhaR (282 aa).

Residues 179–277 form the HTH araC/xylS-type domain; it reads DKLITALANS…GMTPSQWRHL (99 aa). DNA-binding regions (H-T-H motif) lie at residues 196–217 and 244–267; these read DAFC…RAQT and VSEI…TRET.

In terms of assembly, binds DNA as a dimer.

The protein localises to the cytoplasm. Its function is as follows. Activates expression of the rhaSR operon in response to L-rhamnose. The chain is HTH-type transcriptional activator RhaR from Salmonella choleraesuis (strain SC-B67).